The following is a 138-amino-acid chain: Basic phospholipase A2 DsM-b1/DsM-b1' (138 aa).

Residues 1–16 (MRTLWIVAMCLIGVEG) form the signal peptide. 7 disulfide bridges follow: C42-C131, C44-C60, C59-C111, C65-C138, C66-C104, C73-C97, and C91-C102. Ca(2+) contacts are provided by Y43, G45, and G47. H63 is an active-site residue. D64 contacts Ca(2+). D105 is an active-site residue.

Requires Ca(2+) as cofactor. Expressed by the venom gland.

Its subcellular location is the secreted. The catalysed reaction is a 1,2-diacyl-sn-glycero-3-phosphocholine + H2O = a 1-acyl-sn-glycero-3-phosphocholine + a fatty acid + H(+). Exhibits high hydrolytic activities and shows strong preference for the anionic micelles (dPPC with deoxycholate) to the zwitterionic micelles (dPPC with Triton X-100). PLA2 catalyzes the calcium-dependent hydrolysis of the 2-acyl groups in 3-sn-phosphoglycerides. The chain is Basic phospholipase A2 DsM-b1/DsM-b1' from Daboia siamensis (Eastern Russel's viper).